The chain runs to 640 residues: Probable potassium transport system protein Kup 2 (640 aa).

Residues 1–20 (MTADIAATPAETPATNGHGD) form a disordered region. The next 12 helical transmembrane spans lie at 30–50 (LTLG…LYAL), 71–91 (VVSL…VVIL), 117–137 (ASII…DAVI), 155–175 (AAFD…LFAV), 183–203 (VAAF…IAAF), 224–244 (FMLH…LAVT), 265–285 (WLFV…ALVI), 294–314 (PFFL…ATVA), 363–383 (LLLV…ALAS), 385–405 (YGIS…VVIW), 410–430 (WSPI…LTFL), and 437–457 (VLEG…LMYT).

It belongs to the HAK/KUP transporter (TC 2.A.72) family.

Its subcellular location is the cell inner membrane. The enzyme catalyses K(+)(in) + H(+)(in) = K(+)(out) + H(+)(out). In terms of biological role, transport of potassium into the cell. Likely operates as a K(+):H(+) symporter. In Bradyrhizobium sp. (strain ORS 278), this protein is Probable potassium transport system protein Kup 2.